The sequence spans 363 residues: Homeobox protein Hox-A2 (363 aa).

Disordered stretches follow at residues 23-133 (TSFP…SRRL) and 183-216 (MKHK…DEEK). 2 stretches are compositionally biased toward polar residues: residues 31 to 46 (TFQS…SHST) and 55 to 78 (TIPS…NGTS). The short motif at 88 to 93 (EYPWMK) is the Antp-type hexapeptide element. Residues 130–189 (SRRLRTAYTNTQLLELEKEFHFNKYLCRPRRVEIAALLDLTERQVKVWFQNRRMKHKRQT) constitute a DNA-binding region (homeobox).

It belongs to the Antp homeobox family. Proboscipedia subfamily.

The protein localises to the nucleus. Its function is as follows. Sequence-specific transcription factor which is part of a developmental regulatory system that provides cells with specific positional identities on the anterior-posterior axis. The chain is Homeobox protein Hox-A2 (HOXA2) from Heterodontus francisci (Horn shark).